Consider the following 102-residue polypeptide: Small ribosomal subunit protein uS10 (102 aa).

It belongs to the universal ribosomal protein uS10 family. Part of the 30S ribosomal subunit.

Involved in the binding of tRNA to the ribosomes. This chain is Small ribosomal subunit protein uS10, found in Arthrobacter sp. (strain FB24).